The sequence spans 285 residues: Protein pxr1 (285 aa).

Residues 1–11 show a composition bias toward basic residues; that stretch reads MGLAAPRKKIK. Positions 1-23 are disordered; that stretch reads MGLAAPRKKIKISHDPNNTNWSR. Residues 25 to 79 form the G-patch domain; it reads TSGFGHKILSSQGWTPGSFLGARNAAHAEMFTAASASHIKVVLKDDTLGLGARPK. The disordered stretch occupies residues 144 to 263; it reads TPIVTEEPQG…MGRHVFRGRH (120 aa). Positions 152-163 are enriched in basic and acidic residues; the sequence is QGIHKDKQEDKL. The segment covering 190 to 208 has biased composition (basic residues); sequence KKKKSKSKNHREKKDRKRK. Over residues 224–234 the composition is skewed to basic and acidic residues; the sequence is RSTEKKSKATR. Residues 254 to 263 are compositionally biased toward basic residues; the sequence is MGRHVFRGRH.

This sequence belongs to the PINX1 family.

The protein localises to the nucleus. It localises to the nucleolus. In terms of biological role, involved in rRNA-processing at A0, A1 and A2 sites and negatively regulates telomerase. This is Protein pxr1 (pxr1) from Aspergillus niger (strain ATCC MYA-4892 / CBS 513.88 / FGSC A1513).